The sequence spans 405 residues: Probable tRNA sulfurtransferase (405 aa).

The THUMP domain occupies Asp60 to Thr165. ATP-binding positions include Met183–Leu184, His208–Phe209, Arg265, Gly287, and Gln296.

This sequence belongs to the ThiI family.

It is found in the cytoplasm. It catalyses the reaction [ThiI sulfur-carrier protein]-S-sulfanyl-L-cysteine + a uridine in tRNA + 2 reduced [2Fe-2S]-[ferredoxin] + ATP + H(+) = [ThiI sulfur-carrier protein]-L-cysteine + a 4-thiouridine in tRNA + 2 oxidized [2Fe-2S]-[ferredoxin] + AMP + diphosphate. The catalysed reaction is [ThiS sulfur-carrier protein]-C-terminal Gly-Gly-AMP + S-sulfanyl-L-cysteinyl-[cysteine desulfurase] + AH2 = [ThiS sulfur-carrier protein]-C-terminal-Gly-aminoethanethioate + L-cysteinyl-[cysteine desulfurase] + A + AMP + 2 H(+). The protein operates within cofactor biosynthesis; thiamine diphosphate biosynthesis. Its function is as follows. Catalyzes the ATP-dependent transfer of a sulfur to tRNA to produce 4-thiouridine in position 8 of tRNAs, which functions as a near-UV photosensor. Also catalyzes the transfer of sulfur to the sulfur carrier protein ThiS, forming ThiS-thiocarboxylate. This is a step in the synthesis of thiazole, in the thiamine biosynthesis pathway. The sulfur is donated as persulfide by IscS. The sequence is that of Probable tRNA sulfurtransferase from Lacticaseibacillus casei (strain BL23) (Lactobacillus casei).